A 95-amino-acid polypeptide reads, in one-letter code: Probable FAD-linked sulfhydryl oxidase OPG072 (95 aa).

Residues 1–8 (MNPKHWGR) lie on the Intravirion side of the membrane. Residues 1–95 (MNPKHWGRAV…AIDVSKVKPL (95 aa)) enclose the ERV/ALR sulfhydryl oxidase domain. A helical membrane pass occupies residues 9 to 25 (AVWTIIFIVLSQAGLDG). At 26–95 (NIEACKRKLY…AIDVSKVKPL (70 aa)) the chain is on the virion surface side. The cysteines at positions 43 and 46 are disulfide-linked.

This sequence belongs to the orthopoxvirus OPG072 family. In terms of assembly, interacts with OPG128; this interaction involves formation of a transient disulfide-bonded intermediate, allowing disulfide bond transfer. The cofactor is FAD.

It localises to the virion membrane. The protein resides in the host cytoplasm. The catalysed reaction is 2 R'C(R)SH + O2 = R'C(R)S-S(R)CR' + H2O2. Its function is as follows. FAD-dependent sulfhydryl oxidase that catalyzes disulfide bond formation. The complete pathway for formation of disulfide bonds in intracellular virion membrane proteins sequentially involves thiol-disulfide transfer between OPG072, OPG128 and OPG088. The chain is Probable FAD-linked sulfhydryl oxidase OPG072 (OPG072) from Vaccinia virus (strain Copenhagen) (VACV).